Reading from the N-terminus, the 540-residue chain is Glucose-6-phosphate isomerase (540 aa).

Glu-351 (proton donor) is an active-site residue. Catalysis depends on residues His-382 and Lys-506.

It belongs to the GPI family.

The protein resides in the cytoplasm. The catalysed reaction is alpha-D-glucose 6-phosphate = beta-D-fructose 6-phosphate. It participates in carbohydrate biosynthesis; gluconeogenesis. Its pathway is carbohydrate degradation; glycolysis; D-glyceraldehyde 3-phosphate and glycerone phosphate from D-glucose: step 2/4. Its function is as follows. Catalyzes the reversible isomerization of glucose-6-phosphate to fructose-6-phosphate. The sequence is that of Glucose-6-phosphate isomerase from Corynebacterium glutamicum (strain R).